The chain runs to 806 residues: Dimethyl sulfoxide reductase DmsA (806 aa).

Positions 1–35 form a signal peptide, tat-type signal; the sequence is MSNFNQISRRDFVKASSAGAALAVSNLTLPFNVMA. In terms of domain architecture, 4Fe-4S Mo/W bis-MGD-type spans 47-109; it reads ERIVWSACTV…SMRRRVYNPD (63 aa). The [4Fe-4S] cluster site is built by cysteine 54, cysteine 58, cysteine 62, and cysteine 95. Residues 163–167, serine 196, 236–237, 262–263, 283–285, 378–379, arginine 382, asparagine 480, 504–505, histidine 693, 699–701, asparagine 780, and 796–797 each bind Mo-bis(molybdopterin guanine dinucleotide); these read LGGTM, ET, ID, GTD, WG, HST, and QH. The interval 786–806 is disordered; the sequence is RPSPLAKGNPQHSNLVQVERL. A compositionally biased stretch (polar residues) spans 795-806; it reads PQHSNLVQVERL.

Belongs to the prokaryotic molybdopterin-containing oxidoreductase family. As to quaternary structure, heterotrimeric enzyme composed of a catalytic heterodimer (DmsAB) and a membrane anchor protein (DmsC). The cofactor is [4Fe-4S] cluster. Requires Mo-bis(molybdopterin guanine dinucleotide) as cofactor. Post-translationally, predicted to be exported by the Tat system. The position of the signal peptide cleavage has not been experimentally proven.

The protein resides in the cell membrane. It carries out the reaction dimethyl sulfide + a menaquinone + H2O = dimethyl sulfoxide + a menaquinol. Catalyzes the reduction of dimethyl sulfoxide (DMSO) to dimethyl sulfide (DMS). The terminal DMSO reductase can also use various sulfoxides and N-oxide compounds as terminal electron acceptor in addition to DMSO. The sequence is that of Dimethyl sulfoxide reductase DmsA (dmsA) from Haemophilus influenzae (strain ATCC 51907 / DSM 11121 / KW20 / Rd).